The following is a 664-amino-acid chain: MGVSVLTFHVSLFLKRILSIAFFLLSLSTLLRIVNAQQYVDNNIGSMVLSDYDFAETPSVRVQRALEILRYYYEQEDVTYEEIIIQRNHAIELLRSASHDNNTDAMLYLANIEFFGLFEIIPEIEDSVKYYDMLQKANGSAFANNMMGFFYSTSFSEYASNNPALARIHWELAAKQGSLDAHQFLAYHNLIALNMPQSDEEAVKHYKFISDHLFEEECGSNVTYLKCIWPEIQDYNFAGENGMGVYGAASAYTYSDAYQALHTRSQYLREMSNSIEDWDYELMFEVAKLRLHGMYKYPRNYTVSDVLFRKVSRQYWPYTSENSVLANTPQSIISLAAQSCGYLGLLHLFDKGPLFDIDKAYWWFKRGATKNDSNSYYGLGYMAYHGLTSNGVDREKGMRLINLAVMNENPHALMFLGLIRLEEARYEEAYHLFLRAATQKSVISYKYLADCYYNGTGTSRSMISASLYYKKFVEAIRASATSMAIALEEIDEYGYFHNSFVYYLYAAQMGYALAEINAAYLMDENKFLINSVFRYFNYTQSEQEAAHDKFAYEFYSRAAAQGDIDAIFKLGDYYYYGIGTPKDYSKAYTCYKIAYEQSSIGMGLWNMAYMHEYGIGRDQDIYIARRLLDELSSNQNSYFPLKVAIFWINIHQLYIKLLKLLRLR.

The signal sequence occupies residues 1 to 35 (MGVSVLTFHVSLFLKRILSIAFFLLSLSTLLRIVN). N101 and N138 each carry an N-linked (GlcNAc...) asparagine glycan. Sel1-like repeat units lie at residues 141–178 (AFAN…KQGS) and 179–214 (LDAH…DHLF). N-linked (GlcNAc...) asparagine glycans are attached at residues N221, N300, and N371. Sel1-like repeat units follow at residues 337–372 (AQSC…TKND), 373–409 (SNSY…MNEN), 410–441 (PHAL…TQKS), and 442–477 (VISY…EAIR). Residues N454 and N537 are each glycosylated (N-linked (GlcNAc...) asparagine). Sel1-like repeat units lie at residues 564–599 (IDAI…EQSS) and 601–636 (GMGL…SNQN).

This sequence belongs to the sel-1 family.

This is an uncharacterized protein from Schizosaccharomyces pombe (strain 972 / ATCC 24843) (Fission yeast).